A 193-amino-acid polypeptide reads, in one-letter code: Imidazoleglycerol-phosphate dehydratase (193 aa).

It belongs to the imidazoleglycerol-phosphate dehydratase family.

The protein resides in the cytoplasm. The catalysed reaction is D-erythro-1-(imidazol-4-yl)glycerol 3-phosphate = 3-(imidazol-4-yl)-2-oxopropyl phosphate + H2O. The protein operates within amino-acid biosynthesis; L-histidine biosynthesis; L-histidine from 5-phospho-alpha-D-ribose 1-diphosphate: step 6/9. This chain is Imidazoleglycerol-phosphate dehydratase, found in Methanoculleus marisnigri (strain ATCC 35101 / DSM 1498 / JR1).